Consider the following 313-residue polypeptide: Methionyl-tRNA formyltransferase (313 aa).

Position 110–113 (110–113 (SLLP)) interacts with (6S)-5,6,7,8-tetrahydrofolate.

Belongs to the Fmt family.

The catalysed reaction is L-methionyl-tRNA(fMet) + (6R)-10-formyltetrahydrofolate = N-formyl-L-methionyl-tRNA(fMet) + (6S)-5,6,7,8-tetrahydrofolate + H(+). Its function is as follows. Attaches a formyl group to the free amino group of methionyl-tRNA(fMet). The formyl group appears to play a dual role in the initiator identity of N-formylmethionyl-tRNA by promoting its recognition by IF2 and preventing the misappropriation of this tRNA by the elongation apparatus. In Lysinibacillus sphaericus (strain C3-41), this protein is Methionyl-tRNA formyltransferase.